A 596-amino-acid polypeptide reads, in one-letter code: Elongation factor 4 (596 aa).

The 183-residue stretch at 2–184 (KNIRNFAIIA…SIVKYIPPPE (183 aa)) folds into the tr-type G domain. GTP-binding positions include 14-19 (DHGKST) and 131-134 (NKID).

It belongs to the TRAFAC class translation factor GTPase superfamily. Classic translation factor GTPase family. LepA subfamily.

Its subcellular location is the cell inner membrane. The catalysed reaction is GTP + H2O = GDP + phosphate + H(+). Functionally, required for accurate and efficient protein synthesis under certain stress conditions. May act as a fidelity factor of the translation reaction, by catalyzing a one-codon backward translocation of tRNAs on improperly translocated ribosomes. Back-translocation proceeds from a post-translocation (POST) complex to a pre-translocation (PRE) complex, thus giving elongation factor G a second chance to translocate the tRNAs correctly. Binds to ribosomes in a GTP-dependent manner. This is Elongation factor 4 from Neorickettsia sennetsu (strain ATCC VR-367 / Miyayama) (Ehrlichia sennetsu).